We begin with the raw amino-acid sequence, 303 residues long: ADP-ribosyl cyclase/cyclic ADP-ribose hydrolase 1 (303 aa).

Topologically, residues 1-21 (MANYEFSQVSEDRPGCRLTRK) are cytoplasmic. Residues 22-44 (AQIGLGVGLLLLVALVVVVVIVL) traverse the membrane as a helical; Signal-anchor for type II membrane protein segment. Topologically, residues 45-303 (WPRSPLVWKG…PEHPSCRLNV (259 aa)) are extracellular. Disulfide bonds link C69/C85, C102/C183, and C163/C176. N103 is a glycosylation site (N-linked (GlcNAc...) asparagine). C122 is an active-site residue. N123 carries N-linked (GlcNAc...) asparagine glycosylation. The active site involves C204. 2 N-linked (GlcNAc...) asparagine glycosylation sites follow: N212 and N222. 2 disulfide bridges follow: C257–C278 and C290–C299.

This sequence belongs to the ADP-ribosyl cyclase family. Homodimer. As to expression, spleen, liver, heart, thymus, thyroid gland, ileum, colon, cerebellum, salivary gland, adrenal gland, jejunum, islets of Langerhans and osteoclasts.

The protein localises to the cell membrane. The enzyme catalyses NAD(+) = cyclic ADP-beta-D-ribose + nicotinamide + H(+). It catalyses the reaction nicotinate + NADP(+) = nicotinate-adenine dinucleotide phosphate + nicotinamide. It carries out the reaction NAD(+) + H2O = ADP-D-ribose + nicotinamide + H(+). With respect to regulation, both NAADP and cADPR synthesis are inhibited by nicotinic acid. Functionally, synthesizes the second messengers cyclic ADP-ribose and nicotinate-adenine dinucleotide phosphate, the former a second messenger for glucose-induced insulin secretion, the latter a Ca(2+) mobilizer. Also has cADPR hydrolase activity. In terms of biological role, regulates osteoclastic bone resorption, probably via production of cyclic ADP-ribose and triggering of a cytosolic calcium ion signal through ryanodine receptor activation. The sequence is that of ADP-ribosyl cyclase/cyclic ADP-ribose hydrolase 1 (Cd38) from Rattus norvegicus (Rat).